The primary structure comprises 120 residues: uncharacterized protein (120 aa).

The helical transmembrane segment at 22–44 (ITVASCIGAAQGALFSIASALLL) threads the bilayer. N-linked (GlcNAc...) asparagine glycosylation occurs at asparagine 114.

The protein localises to the membrane. This is an uncharacterized protein from Saccharomyces cerevisiae (strain ATCC 204508 / S288c) (Baker's yeast).